The chain runs to 173 residues: dCTP deaminase, dUMP-forming (173 aa).

Residues 93 to 98 (RSSIGR), aspartate 111, 119 to 121 (TLE), glutamine 138, and tyrosine 151 contribute to the dCTP site. Glutamate 121 serves as the catalytic Proton donor/acceptor.

It belongs to the dCTP deaminase family. In terms of assembly, homotrimer.

It carries out the reaction dCTP + 2 H2O = dUMP + NH4(+) + diphosphate. It functions in the pathway pyrimidine metabolism; dUMP biosynthesis; dUMP from dCTP: step 1/1. Functionally, bifunctional enzyme that catalyzes both the deamination of dCTP to dUTP and the hydrolysis of dUTP to dUMP without releasing the toxic dUTP intermediate. The polypeptide is dCTP deaminase, dUMP-forming (Cytophaga hutchinsonii (strain ATCC 33406 / DSM 1761 / CIP 103989 / NBRC 15051 / NCIMB 9469 / D465)).